We begin with the raw amino-acid sequence, 251 residues long: MKKAGLLFLVMIVIAVVAAGIGYWKLTGEESDTLRNIVLEECLPNQQQNQNPSPCAEVKPNAGYVVLKDLNGPLQYLLMPTYRINGTESPLLTDPSTPNFFWLAWQARDFMSKKYGQLVPDRAVSLAINSRTGRTQNHFHIHISCIRPDVREQLDNNLANISSRWLPLPGGLRGHEYLARRVTESELVQRSPFIMLAEEVPEAREHMGSYGLAMVRQSDNSFVLLATQRNLLTLNRASAEEIQDHQCEILR.

The helical transmembrane segment at 4 to 24 (AGLLFLVMIVIAVVAAGIGYW) threads the bilayer.

It belongs to the Cdh family.

The protein localises to the cell inner membrane. It catalyses the reaction a CDP-1,2-diacyl-sn-glycerol + H2O = a 1,2-diacyl-sn-glycero-3-phosphate + CMP + 2 H(+). It participates in phospholipid metabolism; CDP-diacylglycerol degradation; phosphatidate from CDP-diacylglycerol: step 1/1. This is CDP-diacylglycerol pyrophosphatase from Escherichia coli O9:H4 (strain HS).